Reading from the N-terminus, the 465-residue chain is Intraflagellar transport protein 54 (465 aa).

Disordered stretches follow at residues 119-301 (VRSN…GFTM) and 347-366 (LHGD…DKKP). Residues 144-207 (LEALAREKAE…KQKQQQQQQQ (64 aa)) adopt a coiled-coil conformation. Residues 146-198 (ALAREKAEKERQRREQEQQERERKERERQEKEREEREKHELESRERAEAEQWK) are compositionally biased toward basic and acidic residues. Residues 199–220 (QKQQQQQQQQQSAISPQKSPPK) show a composition bias toward low complexity. A compositionally biased stretch (basic and acidic residues) spans 222–242 (RFADDDKTRVEEHQPVIERPH).

It belongs to the TRAF3IP1 family.

Its subcellular location is the cell projection. It localises to the cilium. The protein localises to the flagellum. It is found in the cytoplasm. The protein resides in the cytoskeleton. Its subcellular location is the flagellum axoneme. It localises to the flagellum basal body. In terms of biological role, component of the intraflagellar transport complex B (IFT-B) involved in flagellar assembly. The protein is Intraflagellar transport protein 54 of Giardia intestinalis (strain ATCC 50803 / WB clone C6) (Giardia lamblia).